A 421-amino-acid polypeptide reads, in one-letter code: Acylglycerol kinase, mitochondrial (421 aa).

K6 carries the post-translational modification N6-acetyllysine. Residues 15–31 (TTAGLCLLTWGGHWLYG) form a hydrophobic region. A DAGKc domain is found at 58-199 (AQVKKATVFL…LDVLQIKGEK (142 aa)). Residues 252 to 271 (ISYTGPRERPPIEPEETPPR) form a disordered region.

It belongs to the AGK family. Component of the TIM22 complex, which core is composed of TIMM22, associated with TIMM10 (TIMM10A and/or TIMM10B), TIMM9, AGK and TIMM29. Interacts with SMIM26. Requires Mg(2+) as cofactor. As to expression, ubiquitously expressed.

Its subcellular location is the mitochondrion inner membrane. It is found in the mitochondrion intermembrane space. It carries out the reaction a monoacylglycerol + ATP = a monoacyl-sn-glycero-3-phosphate + ADP + H(+). The enzyme catalyses a 1,2-diacyl-sn-glycerol + ATP = a 1,2-diacyl-sn-glycero-3-phosphate + ADP + H(+). The catalysed reaction is an N-acylsphing-4-enine + ATP = an N-acylsphing-4-enine 1-phosphate + ADP + H(+). It catalyses the reaction 1,2-di-(9Z-octadecenoyl)-sn-glycerol + ATP = 1,2-di-(9Z-octadecenoyl)-sn-glycero-3-phosphate + ADP + H(+). It carries out the reaction 1-(9Z-octadecenoyl)-sn-glycerol + ATP = 1-(9Z-octadecenoyl)-sn-glycero-3-phosphate + ADP + H(+). The enzyme catalyses 1-(5Z,8Z,11Z,14Z-eicosatetraenoyl)-sn-glycerol + ATP = 1-(5Z,8Z,11Z,14Z-eicosatetraenoyl)-sn-glycero-3-phosphate + ADP + H(+). The catalysed reaction is a 1-acyl-sn-glycerol + ATP = a 1-acyl-sn-glycero-3-phosphate + ADP + H(+). It catalyses the reaction 1-hexadecanoyl-sn-glycerol + ATP = 1-hexadecanoyl-sn-glycero-3-phosphate + ADP + H(+). It carries out the reaction a 2-acylglycerol + ATP = a 2-acyl-sn-glycerol 3-phosphate + ADP + H(+). The enzyme catalyses 2-(5Z,8Z,11Z,14Z-eicosatetraenoyl)-glycerol + ATP = 2-(5Z,8Z,11Z,14Z-eicosatetraenoyl)-sn-glycero-3-phosphate + ADP + H(+). The catalysed reaction is N-(hexanoyl)sphing-4-enine + ATP = N-hexanoylsphing-4-enine 1-phosphate + ADP + H(+). It participates in lipid metabolism; glycerolipid metabolism. Both the ceramide and diacylglycerol kinase activities are inhibited by sphingosine and stimulated by cardiolipin. Both activities are stimulated by calcium when magnesium concentrations are low but inhibited by calcium when magnesium concentrations are high. In terms of biological role, lipid kinase that can phosphorylate both monoacylglycerol and diacylglycerol to form lysophosphatidic acid (LPA) and phosphatidic acid (PA), respectively. Phosphorylates ceramide but not sphingosine. Phosphorylates 1,2-dioleoylglycerol more rapidly than 2,3-dioleoylglycerol. Independently of its lipid kinase activity, acts as a component of the TIM22 complex. The TIM22 complex mediates the import and insertion of multi-pass transmembrane proteins into the mitochondrial inner membrane by forming a twin-pore translocase that uses the membrane potential as the external driving force. In the TIM22 complex, required for the import of a subset of metabolite carriers into mitochondria, such as ANT1/SLC25A4 and SLC25A24, while it is not required for the import of TIMM23. Overexpression increases the formation and secretion of LPA, resulting in transactivation of EGFR and activation of the downstream MAPK signaling pathway, leading to increased cell growth. The chain is Acylglycerol kinase, mitochondrial from Mus musculus (Mouse).